Consider the following 109-residue polypeptide: SRA stem-loop-interacting RNA-binding protein, mitochondrial (109 aa).

Phosphoserine is present on Ser-15. In terms of domain architecture, RRM spans 19 to 103; sequence PVAFVRRIPW…RRPKLPQTSD (85 aa). Thr-101 is modified (phosphothreonine). Residue Ser-102 is modified to Phosphoserine.

Ubiquitously expressed, with highest level in heart, liver, skeletal muscle and testis.

Its subcellular location is the mitochondrion. The protein localises to the nucleus. RNA-binding protein that acts as a nuclear receptor corepressor. Probably acts by binding the SRA RNA, and repressing the SRA-mediated nuclear receptor coactivation. Binds the STR7 loop of SRA RNA. Also able to repress glucocorticoid (GR), androgen (AR), thyroid (TR) and VDR-mediated transactivation. This chain is SRA stem-loop-interacting RNA-binding protein, mitochondrial (SLIRP), found in Homo sapiens (Human).